A 131-amino-acid chain; its full sequence is Ribonuclease VapC3 (131 aa).

Positions 4–121 (VVDASAIAAL…GKLLTLDRQL (118 aa)) constitute a PINc domain. Mg(2+)-binding residues include Asp6, Asp100, and Asp118.

This sequence belongs to the PINc/VapC protein family. Homodimer. Forms a complex with putative antitoxin VapB3, possibly VapB(2)-VapC(2). The cofactor is Mg(2+).

Inhibited by EDTA. Toxic component of a type II toxin-antitoxin (TA) system. Has ribonuclease activity. This chain is Ribonuclease VapC3, found in Pyrobaculum aerophilum (strain ATCC 51768 / DSM 7523 / JCM 9630 / CIP 104966 / NBRC 100827 / IM2).